The chain runs to 558 residues: Dihydroxy-acid dehydratase (558 aa).

Mg(2+) is bound at residue D78. A [2Fe-2S] cluster-binding site is contributed by C119. Residues D120 and K121 each contribute to the Mg(2+) site. The residue at position 121 (K121) is an N6-carboxylysine. C191 is a binding site for [2Fe-2S] cluster. E443 contacts Mg(2+). The active-site Proton acceptor is the S469.

This sequence belongs to the IlvD/Edd family. As to quaternary structure, homodimer. It depends on [2Fe-2S] cluster as a cofactor. Mg(2+) serves as cofactor.

The catalysed reaction is (2R)-2,3-dihydroxy-3-methylbutanoate = 3-methyl-2-oxobutanoate + H2O. The enzyme catalyses (2R,3R)-2,3-dihydroxy-3-methylpentanoate = (S)-3-methyl-2-oxopentanoate + H2O. The protein operates within amino-acid biosynthesis; L-isoleucine biosynthesis; L-isoleucine from 2-oxobutanoate: step 3/4. Its pathway is amino-acid biosynthesis; L-valine biosynthesis; L-valine from pyruvate: step 3/4. Functionally, functions in the biosynthesis of branched-chain amino acids. Catalyzes the dehydration of (2R,3R)-2,3-dihydroxy-3-methylpentanoate (2,3-dihydroxy-3-methylvalerate) into 2-oxo-3-methylpentanoate (2-oxo-3-methylvalerate) and of (2R)-2,3-dihydroxy-3-methylbutanoate (2,3-dihydroxyisovalerate) into 2-oxo-3-methylbutanoate (2-oxoisovalerate), the penultimate precursor to L-isoleucine and L-valine, respectively. This is Dihydroxy-acid dehydratase from Solidesulfovibrio magneticus (strain ATCC 700980 / DSM 13731 / RS-1) (Desulfovibrio magneticus).